A 426-amino-acid polypeptide reads, in one-letter code: D-tagatose-1,6-bisphosphate aldolase subunit KbaZ (426 aa).

The protein belongs to the GatZ/KbaZ family. KbaZ subfamily. As to quaternary structure, forms a complex with KbaY.

It participates in carbohydrate metabolism; D-tagatose 6-phosphate degradation; D-glyceraldehyde 3-phosphate and glycerone phosphate from D-tagatose 6-phosphate: step 2/2. In terms of biological role, component of the tagatose-1,6-bisphosphate aldolase KbaYZ that is required for full activity and stability of the Y subunit. Could have a chaperone-like function for the proper and stable folding of KbaY. When expressed alone, KbaZ does not show any aldolase activity. The sequence is that of D-tagatose-1,6-bisphosphate aldolase subunit KbaZ from Shigella flexneri.